The following is a 111-amino-acid chain: UPF0125 protein SO_1475 (111 aa).

Positions 88-111 (VRRRRADKAKDEGRANKVTGGRVS) are disordered.

The protein belongs to the UPF0125 (RnfH) family.

The sequence is that of UPF0125 protein SO_1475 from Shewanella oneidensis (strain ATCC 700550 / JCM 31522 / CIP 106686 / LMG 19005 / NCIMB 14063 / MR-1).